The primary structure comprises 414 residues: Esterase FrsA (414 aa).

Belongs to the FrsA family.

It catalyses the reaction a carboxylic ester + H2O = an alcohol + a carboxylate + H(+). In terms of biological role, catalyzes the hydrolysis of esters. This is Esterase FrsA from Escherichia coli O157:H7.